The sequence spans 331 residues: Probable tRNA pseudouridine synthase B (331 aa).

The segment covering 1-15 (MRCSQREVFVKREEP) has biased composition (basic and acidic residues). A disordered region spans residues 1–27 (MRCSQREVFVKREEPTNPEWGKPPSQR). Residue Asp71 is the Nucleophile of the active site. Residues 238-313 (LPKIWVRDSA…AVVRTDRVVM (76 aa)) form the PUA domain.

It belongs to the pseudouridine synthase TruB family. Type 2 subfamily.

The enzyme catalyses uridine(55) in tRNA = pseudouridine(55) in tRNA. In terms of biological role, could be responsible for synthesis of pseudouridine from uracil-55 in the psi GC loop of transfer RNAs. This Pyrobaculum arsenaticum (strain DSM 13514 / JCM 11321 / PZ6) protein is Probable tRNA pseudouridine synthase B.